Consider the following 131-residue polypeptide: MKKIVAAIVVIGLVFIAFFYLYSRSGDVYQSVDADLITLSSSGQEDIEIEKRQHVKDMLDIMNQGKQVKTEKTSAPDYEGTIKFHKDRYDSFRLWIDGSQQAVFLKDGTYYKLSKNDTKALLNIIKKEAKD.

Residues 1 to 26 (MKKIVAAIVVIGLVFIAFFYLYSRSG) form the signal peptide.

This is an uncharacterized protein from Bacillus subtilis (strain 168).